The primary structure comprises 125 residues: uncharacterized protein (125 aa).

This is an uncharacterized protein from Caenorhabditis elegans.